The chain runs to 514 residues: Protein nucleotidyltransferase YdiU (514 aa).

ATP contacts are provided by Gly-90, Gly-92, Arg-93, Lys-113, Asp-125, Gly-126, Arg-176, and Arg-183. The Proton acceptor role is filled by Asp-267. The Mg(2+) site is built by Asn-268 and Asp-277. Asp-277 lines the ATP pocket.

The protein belongs to the SELO family. Mg(2+) serves as cofactor. It depends on Mn(2+) as a cofactor.

The enzyme catalyses L-seryl-[protein] + ATP = 3-O-(5'-adenylyl)-L-seryl-[protein] + diphosphate. It catalyses the reaction L-threonyl-[protein] + ATP = 3-O-(5'-adenylyl)-L-threonyl-[protein] + diphosphate. It carries out the reaction L-tyrosyl-[protein] + ATP = O-(5'-adenylyl)-L-tyrosyl-[protein] + diphosphate. The catalysed reaction is L-histidyl-[protein] + UTP = N(tele)-(5'-uridylyl)-L-histidyl-[protein] + diphosphate. The enzyme catalyses L-seryl-[protein] + UTP = O-(5'-uridylyl)-L-seryl-[protein] + diphosphate. It catalyses the reaction L-tyrosyl-[protein] + UTP = O-(5'-uridylyl)-L-tyrosyl-[protein] + diphosphate. Functionally, nucleotidyltransferase involved in the post-translational modification of proteins. It can catalyze the addition of adenosine monophosphate (AMP) or uridine monophosphate (UMP) to a protein, resulting in modifications known as AMPylation and UMPylation. The chain is Protein nucleotidyltransferase YdiU from Photobacterium profundum (strain SS9).